The following is a 112-amino-acid chain: Cytochrome c type-1 (112 aa).

Cys20, Cys23, His24, and Met85 together coordinate heme c.

Post-translationally, binds 1 heme c group covalently per subunit.

It is found in the mitochondrion intermembrane space. Its function is as follows. Electron carrier between complex III (ubiquinol-cytochrome c oxireductase) and complex IV (cytochrome c oxidase). The chain is Cytochrome c type-1 from Ascaris suum (Pig roundworm).